The following is a 281-amino-acid chain: MTQKIIRVGNIEIANDKPFVLFGGMNVLESRDLALKVCEEYVRVTEKLGIPYVFKASFDKANRSSVNSYRGPGMEEGLKIFEEIKRTFNVPVITDVHEPYQCEPVAQVCDIIQLPAFLSRQTDLVVAMAKTGAVINIKKAQFLAPHEMKHILAKCVEAGNDQLILCERGSSFGYNNLVVDMLGFGIMKQFEYPVFFDVTHSLQTPGGRADSAGGRRAQVTDLAKAGMSQGLAGLFLEAHPDPDNAKCDGPCALRLDKLEPFLAQLKQLDDLVKSFPTVETA.

It belongs to the KdsA family.

It localises to the cytoplasm. The enzyme catalyses D-arabinose 5-phosphate + phosphoenolpyruvate + H2O = 3-deoxy-alpha-D-manno-2-octulosonate-8-phosphate + phosphate. It participates in carbohydrate biosynthesis; 3-deoxy-D-manno-octulosonate biosynthesis; 3-deoxy-D-manno-octulosonate from D-ribulose 5-phosphate: step 2/3. Its pathway is bacterial outer membrane biogenesis; lipopolysaccharide biosynthesis. The chain is 2-dehydro-3-deoxyphosphooctonate aldolase from Pseudomonas entomophila (strain L48).